The sequence spans 276 residues: Checkpoint protein HUS1B (276 aa).

The protein belongs to the HUS1 family. As to quaternary structure, interacts with RAD1 and RAD9B.

The sequence is that of Checkpoint protein HUS1B (Hus1b) from Mus musculus (Mouse).